The primary structure comprises 380 residues: Cytochrome b (380 aa).

Transmembrane regions (helical) follow at residues 33–53 (FGSL…FLAM), 77–98 (WLIR…YLHV), 113–133 (WNIG…GYVL), and 178–198 (FFAF…IHLL). Residues histidine 83 and histidine 97 each contribute to the heme b site. 2 residues coordinate heme b: histidine 182 and histidine 196. Position 201 (histidine 201) interacts with a ubiquinone. Helical transmembrane passes span 226-246 (YKDL…ALFS), 288-308 (LGGV…PMLH), 320-340 (LSQI…WIGG), and 347-367 (FVLI…IALP).

This sequence belongs to the cytochrome b family. The cytochrome bc1 complex contains 3 respiratory subunits (MT-CYB, CYC1 and UQCRFS1), 2 core proteins (UQCRC1 and UQCRC2) and probably 6 low-molecular weight proteins. It depends on heme b as a cofactor.

The protein resides in the mitochondrion inner membrane. In terms of biological role, component of the ubiquinol-cytochrome c reductase complex (complex III or cytochrome b-c1 complex) that is part of the mitochondrial respiratory chain. The b-c1 complex mediates electron transfer from ubiquinol to cytochrome c. Contributes to the generation of a proton gradient across the mitochondrial membrane that is then used for ATP synthesis. This Acipenser transmontanus (White sturgeon) protein is Cytochrome b (mt-cyb).